Consider the following 137-residue polypeptide: Large ribosomal subunit protein mL41 (137 aa).

The transit peptide at 1–13 (MGVLAAAARCLVR) directs the protein to the mitochondrion.

This sequence belongs to the mitochondrion-specific ribosomal protein mL41 family. As to quaternary structure, component of the mitochondrial large ribosomal subunit (mt-LSU). Mature mammalian 55S mitochondrial ribosomes consist of a small (28S) and a large (39S) subunit. The 28S small subunit contains a 12S ribosomal RNA (12S mt-rRNA) and 30 different proteins. The 39S large subunit contains a 16S rRNA (16S mt-rRNA), a copy of mitochondrial valine transfer RNA (mt-tRNA(Val)), which plays an integral structural role, and 52 different proteins. Interacts with BCL2. In terms of tissue distribution, present in kidney, liver, thymus and testis, and at lower level in brain and spleen (at protein level).

It is found in the mitochondrion. Its function is as follows. Component of the mitochondrial ribosome large subunit. Also involved in apoptosis and cell cycle. Enhances p53/TP53 stability, thereby contributing to p53/TP53-induced apoptosis in response to growth-inhibitory condition. Enhances p53/TP53 translocation to the mitochondria. Has the ability to arrest the cell cycle at the G1 phase, possibly by stabilizing the CDKN1A and CDKN1B (p27Kip1) proteins. The polypeptide is Large ribosomal subunit protein mL41 (MRPL41) (Homo sapiens (Human)).